Here is a 508-residue protein sequence, read N- to C-terminus: MKYLNLVFVLQLLISIKYASFGRAFSLFEDDTTFANLDKQLKLPQNTQQTLKLDRLNHDDPLFTTFISSVDTDYSLRLRTVDPSKLGIDTVKQWSGYMDYKDSKHFFYWFFESRNDPANDPIILWLNGGPGCSSFTGLLFELGPSSIGADMKPIHNPYSWNNNASMIFLEQPLGVGFSYGDEKVSSTKLAGKDAYIFLELFFEAFPHLRSNDFHIAGESYAGHYIPQIAHEIVVKNPERTFNLTSVMIGNGITDPLIQADYYEPMACGKGGYHPVLSSEECEKMSKAAGRCRRLNKLCYASKSSLPCIVATAYCDSALLEPYINTGLNVYDIRGPCEDNSTDGMCYTGLRYVDQYMNFPEVQETLGSDVHNYSGCDNDVFTGFLFTGDGSKPFQQYIAELLNHNIPVLIYAGDKDYICNWLGNHAWSNELEWINKRRYQRRMLRPWVSKETGEELGQVKNYGPFTFLRIYDAGHMVPYDQPEASLEMVNSWISGNRAFSDLSTLENAS.

A signal peptide spans 1-24 (MKYLNLVFVLQLLISIKYASFGRA). 5 cysteine pairs are disulfide-bonded: cysteine 132–cysteine 375, cysteine 267–cysteine 281, cysteine 291–cysteine 314, cysteine 298–cysteine 307, and cysteine 336–cysteine 345. N-linked (GlcNAc...) asparagine glycosylation occurs at asparagine 163. The active site involves serine 219. The N-linked (GlcNAc...) asparagine glycan is linked to asparagine 242. N-linked (GlcNAc...) asparagine glycans are attached at residues asparagine 339 and asparagine 371. Residue aspartate 415 is part of the active site. Cysteine 418 lines the substrate pocket. Histidine 474 is an active-site residue. Substrate is bound at residue methionine 475.

It belongs to the peptidase S10 family.

The protein localises to the vacuole lumen. It catalyses the reaction Release of a C-terminal amino acid with broad specificity.. Functionally, vacuolar serine-type carboxypeptidase involved in vacuolar zymogen activation, breakdown of the autophagic body, and autophagosome-dependent protein synthesis. Plays a key role in phytochelatin (PC) synthesis from glutathione (GSH) by cleaving the Gly from GSH and form the PC-peptides of the structure (gamma-Glu-Cys)2-Gly. Also involved in resistance to xenobiotics via the degradation of glutathione-S-conjugates. The chain is Vacuolar serine-type carboxypeptidase ATG42 from Saccharomyces cerevisiae (strain ATCC 204508 / S288c) (Baker's yeast).